Here is a 633-residue protein sequence, read N- to C-terminus: Polypeptide N-acetylgalactosaminyltransferase 3 (633 aa).

Residues Met-1–Lys-19 lie on the Cytoplasmic side of the membrane. The chain crosses the membrane as a helical; Signal-anchor for type II membrane protein span at residues Phe-20 to Met-37. The Lumenal portion of the chain corresponds to Gln-38 to Asp-633. The segment at Asp-112 to Glu-145 is disordered. The segment covering Ser-134–Glu-145 has biased composition (basic and acidic residues). Residues Leu-184–Arg-293 form a catalytic subdomain A region. Residues Asp-277 and His-279 each contribute to the Mn(2+) site. Asn-297 carries an N-linked (GlcNAc...) asparagine glycan. Residues Pro-356–Arg-418 form a catalytic subdomain B region. His-415 lines the Mn(2+) pocket. An N-linked (GlcNAc...) asparagine glycan is attached at Asn-484. The Ricin B-type lectin domain maps to Val-504–Ser-630. The cysteines at positions 517 and 535 are disulfide-linked. Residues Asp-519, Glu-522, His-536, and Asn-541 each contribute to the UDP-N-acetyl-alpha-D-galactosamine site. Intrachain disulfides connect Cys-561–Cys-574 and Cys-605–Cys-618.

The protein belongs to the glycosyltransferase 2 family. GalNAc-T subfamily. The cofactor is Mn(2+). As to expression, highly expressed in the reproductive tract, principally in the testis and uterus, and to a lesser degree in the cervix with only trace levels in the ovary. Also expressed at high level in sublingual gland, stomach and colon, with more moderate amounts present in the submandibular and parotid gland as well as the kidney.

The protein localises to the golgi apparatus. It is found in the golgi stack membrane. It carries out the reaction L-seryl-[protein] + UDP-N-acetyl-alpha-D-galactosamine = a 3-O-[N-acetyl-alpha-D-galactosaminyl]-L-seryl-[protein] + UDP + H(+). The enzyme catalyses L-threonyl-[protein] + UDP-N-acetyl-alpha-D-galactosamine = a 3-O-[N-acetyl-alpha-D-galactosaminyl]-L-threonyl-[protein] + UDP + H(+). It functions in the pathway protein modification; protein glycosylation. Catalyzes the initial reaction in O-linked oligosaccharide biosynthesis, the transfer of an N-acetyl-D-galactosamine residue to a serine or threonine residue on the protein receptor. Has activity toward HIV envelope glycoprotein gp120. Has activity towards EA2, MUC2 and MUC5. Probably glycosylates fibronectin in vivo. Glycosylates FGF23. This chain is Polypeptide N-acetylgalactosaminyltransferase 3 (Galnt3), found in Mus musculus (Mouse).